Consider the following 271-residue polypeptide: Aquaporin-1 (271 aa).

At 1-11 the chain is on the cytoplasmic side; the sequence is MASEFKKKIFW. A helical transmembrane segment spans residues 12 to 29; it reads RAVVAEFLAMTLFIFISI. Residues 30 to 48 are Extracellular-facing; it reads GSALGFQYPVRNNQTSGAA. A glycan (N-linked (GlcNAc...) asparagine) is linked at Asn-42. A helical transmembrane segment spans residues 49-67; it reads QDNVKVSLAFGLSIATLAQ. Residues 68–70 are Cytoplasmic-facing; the sequence is SVG. Residues 71 to 84 lie within the membrane without spanning it; it reads HISGAHLNPAVTLG. The short motif at 78–80 is the NPA 1 element; the sequence is NPA. Topologically, residues 85-92 are cytoplasmic; it reads LLLSCQIS. Residues 93 to 111 traverse the membrane as a helical segment; the sequence is VLRAVMYIIAQCVGAIVAT. The Extracellular portion of the chain corresponds to 112 to 135; the sequence is AILSGITSSLPGNSLGLNSLAPGV. A helical transmembrane segment spans residues 136 to 155; it reads DSGQGLGIEIIGTLQLVLCV. The Cytoplasmic segment spans residues 156–165; sequence LATTDRRRRD. A helical membrane pass occupies residues 166 to 183; it reads LGGSAPLAIGFSVALGHL. Residues 184–188 lie on the Extracellular side of the membrane; it reads LAIDY. An intramembrane segment occupies 189–201; sequence TGCGINPARSFGS. The NPA 2 signature appears at 194-196; sequence NPA. The Extracellular portion of the chain corresponds to 202-208; the sequence is AVITHNF. Residues 209–226 traverse the membrane as a helical segment; the sequence is QDHWVFWVGPFIGGALAV. Residues 227–271 are Cytoplasmic-facing; it reads LIYDFILAPRSSDLTDRVKVWTSGQVEEYDLDGDDINSRVEMKPK. Ser-249 bears the Phosphoserine mark. Position 255 is a phosphotyrosine (Tyr-255). Phosphoserine is present on Ser-264.

The protein belongs to the MIP/aquaporin (TC 1.A.8) family. Homotetramer; each monomer provides an independent water pore. Component of the ankyrin-1 complex in the erythrocyte, composed of ANK1, RHCE, RHAG, SLC4A1, EPB42, GYPA, GYPB and AQP1. Interacts with EPHB2; involved in endolymph production in the inner ear. Identified in a complex with STOM. Interacts (via the N-terminal) with ANK1 (via ANK 1-5 repeats). Interacts (via the C-terminal) with EPB42.

The protein resides in the cell membrane. It carries out the reaction H2O(in) = H2O(out). The enzyme catalyses nitric oxide(out) = nitric oxide(in). The catalysed reaction is CO2(out) = CO2(in). It catalyses the reaction glycerol(in) = glycerol(out). It carries out the reaction H2O2(out) = H2O2(in). The enzyme catalyses K(+)(in) = K(+)(out). The catalysed reaction is Na(+)(in) = Na(+)(out). In terms of biological role, forms a water channel that facilitates the transport of water across cell membranes, playing a crucial role in water homeostasis in various tissues. Could also be permeable to small solutes including hydrogen peroxide, glycerol and gases such as amonnia (NH3), nitric oxide (NO) and carbon dioxide (CO2). Recruited to the ankyrin-1 complex, a multiprotein complex of the erythrocyte membrane, it could be part of a CO2 metabolon, linking facilitated diffusion of CO2 across the membrane, anion exchange of Cl(-)/HCO3(-) and interconversion of dissolved CO2 and carbonic acid in the cytosol. In vitro, it shows non-selective gated cation channel activity and may be permeable to cations like K(+) and Na(+) in vivo. This is Aquaporin-1 from Sus scrofa (Pig).